The sequence spans 131 residues: Small ribosomal subunit protein bS6 (131 aa).

The segment at Arg92–Asn131 is disordered.

The protein belongs to the bacterial ribosomal protein bS6 family.

Its function is as follows. Binds together with bS18 to 16S ribosomal RNA. The chain is Small ribosomal subunit protein bS6 from Paracoccus denitrificans (strain Pd 1222).